A 443-amino-acid polypeptide reads, in one-letter code: MSVQVENLEHNMAKLTIEVAAEELEKALDSAYQKQKKQISVPGFRKGKVPRAMIEKMYGAGVFYEDAANILMQQTYAGAVDESGVDIVSRPTVEVTQIEKGQPFIYTAEVAVRPEVTLGKYMGVTVTKIDTSVSDEEVDAELENQRNKNARTVTVTDRPVAEGDTAVIDFEGFVDGVAFEGGKGENHPLEIGSHTFIDTFEDQLVGKNTGDEVEVNVTFPEKYQAEDLAGKPATFKVKINEIKAKELPELDDEFAQDAAGVDTLAEYKEEIKKNLTEKKETEAKKTKEDEAIQKIIDKSKMDLPEAMIETQCETMVEEFAQRIAQSGLTMEQYLQFSGMTVDQLKDQVRPEATTRIQSSLVLEQIAKEENIEVTDADIDAEVEKMAKAYGMEADKLKEYMGDAEKESMKKDIAITKAVDLIMDNVKERAKAKKKADAEESTEE.

One can recognise a PPIase FKBP-type domain in the interval 163 to 248 (GDTAVIDFEG…INEIKAKELP (86 aa)).

It belongs to the FKBP-type PPIase family. Tig subfamily.

The protein localises to the cytoplasm. The catalysed reaction is [protein]-peptidylproline (omega=180) = [protein]-peptidylproline (omega=0). Involved in protein export. Acts as a chaperone by maintaining the newly synthesized protein in an open conformation. Functions as a peptidyl-prolyl cis-trans isomerase. In Agathobacter rectalis (strain ATCC 33656 / DSM 3377 / JCM 17463 / KCTC 5835 / VPI 0990) (Eubacterium rectale), this protein is Trigger factor.